Here is a 347-residue protein sequence, read N- to C-terminus: GPN-loop GTPase 2 (347 aa).

GTP is bound at residue 12-17; that stretch reads GSGKST. Positions 69–71 match the Gly-Pro-Asn (GPN)-loop; involved in dimer interface motif; sequence GPN. Position 175 to 178 (175 to 178) interacts with GTP; that stretch reads SKID.

It belongs to the GPN-loop GTPase family. As to quaternary structure, heterodimers with NPA3/GPN1 or GPN3. Binds to RNA polymerase II (RNAPII).

The protein localises to the cytoplasm. Its function is as follows. Small GTPase required for proper localization of RNA polymerase II and III (RNAPII and RNAPIII). May act at an RNAP assembly step prior to nuclear import. Required for establishment of sister chromatid cohesion. This is GPN-loop GTPase 2 from Saccharomyces cerevisiae (strain ATCC 204508 / S288c) (Baker's yeast).